Consider the following 155-residue polypeptide: Gene 27 protein (155 aa).

Residues 41–114 (KAKTQGMNVP…KAPENPNLPN (74 aa)) are disordered. Composition is skewed to basic and acidic residues over residues 55–68 (KKPEDVAPAKEKPT) and 78–95 (TAKEEKKETAPKAKETKA).

Functionally, required for late gene transcription and DNA replication. The sequence is that of Gene 27 protein (27) from Bacillus subtilis (Bacteriophage SP01).